The following is a 235-amino-acid chain: Secreted RxLR effector protein 27 (235 aa).

An N-terminal signal peptide occupies residues 1 to 25 (MTNLFTRHTRRSLTALALLSGGVYA). The RxLR-dEER signature appears at 36–60 (RSLRVFVTGGQVLWDYRIHFKGIER).

It belongs to the RxLR effector family.

Its subcellular location is the secreted. It is found in the host cytoplasm. The protein resides in the host nucleus. Its function is as follows. Effector that acts as a broad suppressor of cell death to interrupt plant immunity. Inhibits cell death induced by cell death-inducing proteins, including the PAMP elicitor INF1 from P.infestans. This Plasmopara viticola (Downy mildew of grapevine) protein is Secreted RxLR effector protein 27.